A 514-amino-acid chain; its full sequence is 2,3-bisphosphoglycerate-independent phosphoglycerate mutase (514 aa).

Mn(2+) contacts are provided by Asp14 and Ser64. The active-site Phosphoserine intermediate is Ser64. Substrate contacts are provided by residues His125, Arg155 to Asp156, Arg187, Arg193, Arg263 to Arg266, and Lys336. 5 residues coordinate Mn(2+): Asp403, His407, Asp444, His445, and His463.

Belongs to the BPG-independent phosphoglycerate mutase family. As to quaternary structure, monomer. The cofactor is Mn(2+).

It catalyses the reaction (2R)-2-phosphoglycerate = (2R)-3-phosphoglycerate. It functions in the pathway carbohydrate degradation; glycolysis; pyruvate from D-glyceraldehyde 3-phosphate: step 3/5. Catalyzes the interconversion of 2-phosphoglycerate and 3-phosphoglycerate. The polypeptide is 2,3-bisphosphoglycerate-independent phosphoglycerate mutase (Salmonella typhi).